The chain runs to 289 residues: Nitrogenase iron protein (289 aa).

ATP is bound at residue 8–15 (GKGGIGKS). Cys-96 serves as a coordination point for [4Fe-4S] cluster. Arg-99 carries the post-translational modification ADP-ribosylarginine; by dinitrogenase reductase ADP-ribosyltransferase. Cys-130 serves as a coordination point for [4Fe-4S] cluster.

It belongs to the NifH/BchL/ChlL family. In terms of assembly, homodimer. The cofactor is [4Fe-4S] cluster. In terms of processing, the reversible ADP-ribosylation of Arg-99 inactivates the nitrogenase reductase and regulates nitrogenase activity.

It catalyses the reaction N2 + 8 reduced [2Fe-2S]-[ferredoxin] + 16 ATP + 16 H2O = H2 + 8 oxidized [2Fe-2S]-[ferredoxin] + 2 NH4(+) + 16 ADP + 16 phosphate + 6 H(+). The key enzymatic reactions in nitrogen fixation are catalyzed by the nitrogenase complex, which has 2 components: the iron protein and the molybdenum-iron protein. This Parafrankia sp. (strain EAN1pec) protein is Nitrogenase iron protein.